The sequence spans 959 residues: General transcription factor II-I repeat domain-containing protein 1 (959 aa).

Glycyl lysine isopeptide (Lys-Gly) (interchain with G-Cter in SUMO2) cross-links involve residues lysine 27 and lysine 94. Residues proline 96 to arginine 106 are compositionally biased toward basic and acidic residues. Positions proline 96 to serine 117 are disordered. A GTF2I-like 1 repeat occupies leucine 119 to alanine 213. Glycyl lysine isopeptide (Lys-Gly) (interchain with G-Cter in SUMO2) cross-links involve residues lysine 184, lysine 212, lysine 225, lysine 238, lysine 271, lysine 294, lysine 308, lysine 337, lysine 436, lysine 439, and lysine 443. The disordered stretch occupies residues cysteine 230 to serine 250. One copy of the GTF2I-like 2 repeat lies at isoleucine 342 to lysine 436. Residue serine 448 is modified to Phosphoserine. Residues asparagine 468 to arginine 492 are disordered. Residues aspartate 556–proline 650 form a GTF2I-like 3 repeat. Glycyl lysine isopeptide (Lys-Gly) (interchain with G-Cter in SUMO2) cross-links involve residues lysine 567, lysine 579, lysine 588, lysine 622, lysine 638, and lysine 648. Serine 654 is modified (phosphoserine). Residues serine 654–valine 679 form a disordered region. Glycyl lysine isopeptide (Lys-Gly) (interchain with G-Cter in SUMO2) cross-links involve residues proline 669, proline 670, aspartate 680, and lysine 684. Glutamine 686 carries the post-translational modification Phosphoserine. GTF2I-like repeat units lie at residues leucine 696–glutamate 790 and alanine 793–aspartate 887. Residues isoleucine 701, lysine 724, lysine 732, lysine 772, lysine 774, lysine 787, lysine 829, lysine 889, and lysine 893 each participate in a glycyl lysine isopeptide (Lys-Gly) (interchain with G-Cter in SUMO2) cross-link. Positions alanine 892–serine 927 are disordered. The Nuclear localization signal signature appears at proline 898–valine 905. Over residues serine 910–serine 923 the composition is skewed to low complexity.

Belongs to the TFII-I family. Interacts with the retinoblastoma protein (RB1) via its C-terminus. In terms of tissue distribution, highly expressed in adult skeletal muscle, heart, fibroblast, bone and fetal tissues. Expressed at lower levels in all other tissues tested.

The protein resides in the nucleus. May be a transcription regulator involved in cell-cycle progression and skeletal muscle differentiation. May repress GTF2I transcriptional functions, by preventing its nuclear residency, or by inhibiting its transcriptional activation. May contribute to slow-twitch fiber type specificity during myogenesis and in regenerating muscles. Binds troponin I slow-muscle fiber enhancer (USE B1). Binds specifically and with high affinity to the EFG sequences derived from the early enhancer of HOXC8. This Homo sapiens (Human) protein is General transcription factor II-I repeat domain-containing protein 1 (GTF2IRD1).